The primary structure comprises 791 residues: ATP-dependent 6-phosphofructokinase, platelet type (791 aa).

At M1 the chain carries N-acetylmethionine. The interval M1–I399 is N-terminal catalytic PFK domain 1. At S6 the chain carries Phosphoserine. Position 12 is a phosphoserine; by PKA (S12). S21 carries the post-translational modification Phosphoserine. Residues G34, R97 to S98, and G127 to S130 contribute to the ATP site. S142 carries the phosphoserine modification. Substrate is bound by residues S173 to D175, R210, M217 to R219, E273, R301, and H307 to R310. Residue D175 is the Proton acceptor of the active site. At S386 the chain carries Phosphoserine. K395 carries the N6-acetyllysine modification. Residues K400–C411 are interdomain linker. Residues N412–I791 form a C-terminal regulatory PFK domain 2 region. Position 481 (R481) interacts with beta-D-fructose 2,6-bisphosphate. The residue at position 486 (K486) is an N6-acetyllysine. Beta-D-fructose 2,6-bisphosphate-binding positions include T538–N542, R576, M583–G585, and E639. The O-linked (GlcNAc) serine glycan is linked to S540. Y651 carries the phosphotyrosine modification. Beta-D-fructose 2,6-bisphosphate-binding positions include R665 and H671–Q674. Position 688 is an N6-acetyllysine (K688). Position 744 (R744) interacts with beta-D-fructose 2,6-bisphosphate.

This sequence belongs to the phosphofructokinase type A (PFKA) family. ATP-dependent PFK group I subfamily. Eukaryotic two domain clade 'E' sub-subfamily. Homo- and heterotetramers. Phosphofructokinase (PFK) enzyme functions as a tetramer composed of different combinations of 3 types of subunits, called PFKM (M), PFKL (L) and PFKP (P). The composition of the PFK tetramer differs according to the tissue type it is present in. The kinetic and regulatory properties of the tetrameric enzyme are dependent on the subunit composition, hence can vary across tissues. Interacts with ATG4B; promoting phosphorylation of ATG4B. Requires Mg(2+) as cofactor. In terms of processing, glcNAcylation decreases enzyme activity. Phosphorylation at Ser-386 promotes interaction with ATG4B.

Its subcellular location is the cytoplasm. The catalysed reaction is beta-D-fructose 6-phosphate + ATP = beta-D-fructose 1,6-bisphosphate + ADP + H(+). It functions in the pathway carbohydrate degradation; glycolysis; D-glyceraldehyde 3-phosphate and glycerone phosphate from D-glucose: step 3/4. Its activity is regulated as follows. Allosterically activated by ADP, AMP, or fructose 2,6-bisphosphate, and allosterically inhibited by ATP or citrate. Its function is as follows. Catalyzes the phosphorylation of D-fructose 6-phosphate to fructose 1,6-bisphosphate by ATP, the first committing step of glycolysis. This Oryctolagus cuniculus (Rabbit) protein is ATP-dependent 6-phosphofructokinase, platelet type (PFKP).